We begin with the raw amino-acid sequence, 126 residues long: Protein ApaG (126 aa).

An ApaG domain is found at 2 to 126 (DISTPCIKCQ…FRLAIPNILN (125 aa)).

In Vibrio atlanticus (strain LGP32) (Vibrio splendidus (strain Mel32)), this protein is Protein ApaG.